Reading from the N-terminus, the 295-residue chain is 4-hydroxybenzoate octaprenyltransferase (295 aa).

8 consecutive transmembrane segments (helical) span residues 28–48 (PIGI…AADG), 55–75 (VLIF…INDF), 103–123 (WALF…TDPF), 147–167 (LPQL…FTAA), 175–195 (AWLI…YYAM), 219–239 (AIIL…GMRL), 241–261 (LGPY…WEFV), and 275–295 (FLHN…DYGI).

This sequence belongs to the UbiA prenyltransferase family. Requires Mg(2+) as cofactor.

It localises to the cell inner membrane. The enzyme catalyses all-trans-octaprenyl diphosphate + 4-hydroxybenzoate = 4-hydroxy-3-(all-trans-octaprenyl)benzoate + diphosphate. Its pathway is cofactor biosynthesis; ubiquinone biosynthesis. Its function is as follows. Catalyzes the prenylation of para-hydroxybenzoate (PHB) with an all-trans polyprenyl group. Mediates the second step in the final reaction sequence of ubiquinone-8 (UQ-8) biosynthesis, which is the condensation of the polyisoprenoid side chain with PHB, generating the first membrane-bound Q intermediate 3-octaprenyl-4-hydroxybenzoate. This chain is 4-hydroxybenzoate octaprenyltransferase, found in Azotobacter vinelandii (strain DJ / ATCC BAA-1303).